A 240-amino-acid chain; its full sequence is Octanoyltransferase (240 aa).

The interval M1 to V22 is disordered. Over residues A10–A21 the composition is skewed to low complexity. Residues E51–L236 enclose the BPL/LPL catalytic domain. Substrate-binding positions include R89–H96, A166–G168, and G179–A181. The active-site Acyl-thioester intermediate is C197.

This sequence belongs to the LipB family.

The protein resides in the cytoplasm. The catalysed reaction is octanoyl-[ACP] + L-lysyl-[protein] = N(6)-octanoyl-L-lysyl-[protein] + holo-[ACP] + H(+). It participates in protein modification; protein lipoylation via endogenous pathway; protein N(6)-(lipoyl)lysine from octanoyl-[acyl-carrier-protein]: step 1/2. Catalyzes the transfer of endogenously produced octanoic acid from octanoyl-acyl-carrier-protein onto the lipoyl domains of lipoate-dependent enzymes. Lipoyl-ACP can also act as a substrate although octanoyl-ACP is likely to be the physiological substrate. This Corynebacterium jeikeium (strain K411) protein is Octanoyltransferase.